The chain runs to 592 residues: Threonine dehydratase biosynthetic, chloroplastic (592 aa).

The transit peptide at M1–E91 directs the protein to the chloroplast. Position 141 is an N6-(pyridoxal phosphate)lysine (K141). ACT-like domains lie at A419 to T490 and V512 to D583.

This sequence belongs to the serine/threonine dehydratase family. Pyridoxal 5'-phosphate is required as a cofactor.

It is found in the plastid. It localises to the chloroplast. The catalysed reaction is L-threonine = 2-oxobutanoate + NH4(+). It participates in amino-acid biosynthesis; L-isoleucine biosynthesis; 2-oxobutanoate from L-threonine: step 1/1. With respect to regulation, allosterically inhibited by isoleucine. Strain GM11b is isoleucine feedback insensitive and is resistant to the antimetabolite L-O-methylthreonine. Catalyzes the formation of alpha-ketobutyrate from threonine in a two-step reaction. The first step is a dehydration of threonine, followed by rehydration and liberation of ammonia. This chain is Threonine dehydratase biosynthetic, chloroplastic (OMR1), found in Arabidopsis thaliana (Mouse-ear cress).